The following is a 37-amino-acid chain: Large ribosomal subunit protein bL36 (37 aa).

It belongs to the bacterial ribosomal protein bL36 family.

In Rippkaea orientalis (strain PCC 8801 / RF-1) (Cyanothece sp. (strain PCC 8801)), this protein is Large ribosomal subunit protein bL36.